The sequence spans 166 residues: Small ribosomal subunit protein uS5 (166 aa).

The 64-residue stretch at 11–74 (LEDRVVSINR…EDAKKNLINV (64 aa)) folds into the S5 DRBM domain.

Belongs to the universal ribosomal protein uS5 family. In terms of assembly, part of the 30S ribosomal subunit. Contacts proteins S4 and S8.

In terms of biological role, with S4 and S12 plays an important role in translational accuracy. Located at the back of the 30S subunit body where it stabilizes the conformation of the head with respect to the body. The sequence is that of Small ribosomal subunit protein uS5 from Latilactobacillus sakei subsp. sakei (strain 23K) (Lactobacillus sakei subsp. sakei).